A 61-amino-acid polypeptide reads, in one-letter code: Small ribosomal subunit protein uS14C (61 aa).

Residues cysteine 24, cysteine 27, cysteine 40, and cysteine 43 each coordinate Zn(2+).

Belongs to the universal ribosomal protein uS14 family. Zinc-binding uS14 subfamily. In terms of assembly, part of the 30S ribosomal subunit. Contacts proteins S3 and S10. Zn(2+) serves as cofactor.

Its function is as follows. Binds 16S rRNA, required for the assembly of 30S particles and may also be responsible for determining the conformation of the 16S rRNA at the A site. This chain is Small ribosomal subunit protein uS14C, found in Bacillus licheniformis (strain ATCC 14580 / DSM 13 / JCM 2505 / CCUG 7422 / NBRC 12200 / NCIMB 9375 / NCTC 10341 / NRRL NRS-1264 / Gibson 46).